The chain runs to 308 residues: Porphobilinogen deaminase (308 aa).

Cys-241 carries the post-translational modification S-(dipyrrolylmethanemethyl)cysteine.

This sequence belongs to the HMBS family. In terms of assembly, monomer. Requires dipyrromethane as cofactor.

It catalyses the reaction 4 porphobilinogen + H2O = hydroxymethylbilane + 4 NH4(+). Its pathway is porphyrin-containing compound metabolism; protoporphyrin-IX biosynthesis; coproporphyrinogen-III from 5-aminolevulinate: step 2/4. In terms of biological role, tetrapolymerization of the monopyrrole PBG into the hydroxymethylbilane pre-uroporphyrinogen in several discrete steps. The chain is Porphobilinogen deaminase from Staphylococcus aureus (strain Mu50 / ATCC 700699).